A 162-amino-acid polypeptide reads, in one-letter code: Putative 4-hydroxy-4-methyl-2-oxoglutarate aldolase (162 aa).

Substrate-binding positions include 75-78 (GDML) and R97. D98 lines the a divalent metal cation pocket.

The protein belongs to the class II aldolase/RraA-like family. As to quaternary structure, homotrimer. It depends on a divalent metal cation as a cofactor.

The enzyme catalyses 4-hydroxy-4-methyl-2-oxoglutarate = 2 pyruvate. It carries out the reaction oxaloacetate + H(+) = pyruvate + CO2. Catalyzes the aldol cleavage of 4-hydroxy-4-methyl-2-oxoglutarate (HMG) into 2 molecules of pyruvate. Also contains a secondary oxaloacetate (OAA) decarboxylase activity due to the common pyruvate enolate transition state formed following C-C bond cleavage in the retro-aldol and decarboxylation reactions. The sequence is that of Putative 4-hydroxy-4-methyl-2-oxoglutarate aldolase from Pseudomonas aeruginosa (strain LESB58).